Here is a 658-residue protein sequence, read N- to C-terminus: UvrABC system protein B (658 aa).

The Helicase ATP-binding domain occupies 25–182 (DSIRSGNKFN…LKLVDMGYKR (158 aa)). Position 38 to 45 (38 to 45 (GVTGSGKT)) interacts with ATP. The Beta-hairpin motif lies at 91–114 (YYDYYQPEAYIPRQDLFIEKDSSI). Residues 433–596 (QVEVLFDRAK…TPRSASRNLE (164 aa)) enclose the Helicase C-terminal domain. Positions 623–658 (AKIVKELRKQMLEAAKNLEFEKAAALRDEIAKLREL) constitute a UVR domain.

Belongs to the UvrB family. As to quaternary structure, forms a heterotetramer with UvrA during the search for lesions. Interacts with UvrC in an incision complex.

The protein resides in the cytoplasm. Functionally, the UvrABC repair system catalyzes the recognition and processing of DNA lesions. A damage recognition complex composed of 2 UvrA and 2 UvrB subunits scans DNA for abnormalities. Upon binding of the UvrA(2)B(2) complex to a putative damaged site, the DNA wraps around one UvrB monomer. DNA wrap is dependent on ATP binding by UvrB and probably causes local melting of the DNA helix, facilitating insertion of UvrB beta-hairpin between the DNA strands. Then UvrB probes one DNA strand for the presence of a lesion. If a lesion is found the UvrA subunits dissociate and the UvrB-DNA preincision complex is formed. This complex is subsequently bound by UvrC and the second UvrB is released. If no lesion is found, the DNA wraps around the other UvrB subunit that will check the other stand for damage. In Campylobacter fetus subsp. fetus (strain 82-40), this protein is UvrABC system protein B.